We begin with the raw amino-acid sequence, 346 residues long: Cyclin-dependent kinase 7 (346 aa).

The residue at position 2 (Ala2) is an N-acetylalanine. Residue Ser7 is modified to Phosphoserine. One can recognise a Protein kinase domain in the interval 12–295 (YEKLDFLGEG…ASQALKTKYF (284 aa)). Residues 18 to 26 (LGEGQFATV) and Lys41 each bind ATP. Asp137 functions as the Proton acceptor in the catalytic mechanism. At Ser164 the chain carries Phosphoserine; by CDK1 and CDK2. Thr170 carries the phosphothreonine; by CDK2 modification.

The protein belongs to the protein kinase superfamily. CMGC Ser/Thr protein kinase family. CDC2/CDKX subfamily. As to quaternary structure, associates primarily with cyclin-H (CCNH) and MAT1 to form the CAK complex. CAK can further associate with the core-TFIIH to form the TFIIH basal transcription factor; this complex is sensitive to UV light. The CAK complex binds to p53/TP53 in response to DNA damage. Interacts with CDK2, SF1/NR5A1, PUF60 and PRKCI. Interacts with HINT1. Post-translationally, phosphorylation of Ser-164 during mitosis inactivates the enzyme. Phosphorylation of Thr-170 is required for activity. Phosphorylated at Ser-164 and Thr-170 by CDK2.

It localises to the nucleus. The protein localises to the cytoplasm. Its subcellular location is the perinuclear region. The enzyme catalyses L-seryl-[protein] + ATP = O-phospho-L-seryl-[protein] + ADP + H(+). The catalysed reaction is L-threonyl-[protein] + ATP = O-phospho-L-threonyl-[protein] + ADP + H(+). It catalyses the reaction [DNA-directed RNA polymerase] + ATP = phospho-[DNA-directed RNA polymerase] + ADP + H(+). Its activity is regulated as follows. Phosphorylation at Thr-170 is required for enzymatic activity. The association of p53/TP53 to the CAK complex in response to DNA damage reduces kinase activity toward CDK2 and RNA polymerase II repetitive C-terminal domain (CTD), thus stopping cell cycle progression. In terms of biological role, serine/threonine kinase involved in cell cycle control and in RNA polymerase II-mediated RNA transcription. Cyclin-dependent kinases (CDKs) are activated by the binding to a cyclin and mediate the progression through the cell cycle. Each different complex controls a specific transition between 2 subsequent phases in the cell cycle. Required for both activation and complex formation of CDK1/cyclin-B during G2-M transition, and for activation of CDK2/cyclins during G1-S transition (but not complex formation). CDK7 is the catalytic subunit of the CDK-activating kinase (CAK) complex. Phosphorylates SPT5/SUPT5H, SF1/NR5A1, POLR2A, p53/TP53, CDK1, CDK2, CDK4, CDK6 and CDK11B/CDK11. Initiates transcription by RNA polymerase II by mediating phosphorylation of POLR2A at 'Ser-5' of the repetitive C-terminal domain (CTD) when POLR2A is in complex with DNA, promoting dissociation from DNA and initiation. CAK activates the cyclin-associated kinases CDK1, CDK2, CDK4 and CDK6 by threonine phosphorylation, thus regulating cell cycle progression. CAK complexed to the core-TFIIH basal transcription factor activates RNA polymerase II by serine phosphorylation of the CTD of POLR2A, allowing its escape from the promoter and elongation of the transcripts. Its expression and activity are constant throughout the cell cycle. Upon DNA damage, triggers p53/TP53 activation by phosphorylation, but is inactivated in turn by p53/TP53; this feedback loop may lead to an arrest of the cell cycle and of the transcription, helping in cell recovery, or to apoptosis. Required for DNA-bound peptides-mediated transcription and cellular growth inhibition. The protein is Cyclin-dependent kinase 7 (Cdk7) of Mus musculus (Mouse).